The following is a 251-amino-acid chain: Hydroxyacylglutathione hydrolase (251 aa).

Zn(2+)-binding residues include histidine 53, histidine 55, aspartate 57, histidine 58, histidine 110, aspartate 127, and histidine 165.

It belongs to the metallo-beta-lactamase superfamily. Glyoxalase II family. As to quaternary structure, monomer. The cofactor is Zn(2+).

It catalyses the reaction an S-(2-hydroxyacyl)glutathione + H2O = a 2-hydroxy carboxylate + glutathione + H(+). It participates in secondary metabolite metabolism; methylglyoxal degradation; (R)-lactate from methylglyoxal: step 2/2. In terms of biological role, thiolesterase that catalyzes the hydrolysis of S-D-lactoyl-glutathione to form glutathione and D-lactic acid. The polypeptide is Hydroxyacylglutathione hydrolase (Salmonella typhi).